The primary structure comprises 223 residues: MGCASSKEEVALTPLSDVNAAKEVADLKAQVDQLKRQLASAGQSAAPAAAGAVKGGVVETLFFPDEKLPCRNNRRPGGCKRQHCEYSHTPTSLSRFLDYLGSATRTLDICVFTITNDDISDVVLELHNKGVRVRIISDNDQAHTQGSDIDKFRQAGIAVRQDKTAAHMHHKFAIIDGRLLLNGSFNWTRQAVTANNENVTVLSDPKLIASFQQQFDKLWDMFK.

The Mitochondrial intermembrane portion of the chain corresponds to 1–6 (MGCASS). A helical membrane pass occupies residues 7–24 (KEEVALTPLSDVNAAKEV). Over 25 to 223 (ADLKAQVDQL…QFDKLWDMFK (199 aa)) the chain is Cytoplasmic. The region spanning 164-191 (TAAHMHHKFAIIDGRLLLNGSFNWTRQA) is the PLD phosphodiesterase domain. Active-site residues include H169, K171, and D176.

This sequence belongs to the phospholipase D family. MitoPLD/Zucchini subfamily. As to quaternary structure, homodimer.

It localises to the mitochondrion outer membrane. In terms of biological role, plays a critical role in PIWI-interacting RNA (piRNA) biogenesis. piRNAs provide essential protection against the activity of mobile genetic elements. piRNA-mediated transposon silencing is thus critical for maintaining genome stability. Backbone-non-specific, single strand-specific nuclease, cleaving either RNA or DNA substrates with similar affinity. Produces 5' phosphate and 3' hydroxyl termini, suggesting it could directly participate in the processing of primary piRNA transcripts. Has been proposed to act as a cardiolipin hydrolase to generate phosphatidic acid at mitochondrial surface. Although it cannot be excluded that it can act as a phospholipase in some circumstances, this activity could not be confirmed. This chain is Mitochondrial cardiolipin hydrolase, found in Chlamydomonas reinhardtii (Chlamydomonas smithii).